Consider the following 704-residue polypeptide: ATPase synthesis protein 25, mitochondrial (704 aa).

A mitochondrion-targeting transit peptide spans 1 to 59 (MSGIALQGIRCHACRNAAFRSFAAISGLSSSIRRPQSSISYPGSKLYQRNVRTTGRRQF). The span at 57 to 72 (RQFSTLGSVKSQVDSD) shows a compositional bias: polar residues. Positions 57-118 (RQFSTLGSVK…QELPPLPENP (62 aa)) are disordered. The span at 73–83 (LPTKTETKEDA) shows a compositional bias: basic and acidic residues.

The protein belongs to the ATP25 family.

The protein resides in the mitochondrion inner membrane. In terms of biological role, probable mitochondrial mRNA stabilization factor. In Arthroderma benhamiae (strain ATCC MYA-4681 / CBS 112371) (Trichophyton mentagrophytes), this protein is ATPase synthesis protein 25, mitochondrial (ATP25).